The sequence spans 111 residues: Cornifelin homolog B (111 aa).

Belongs to the cornifelin family.

The sequence is that of Cornifelin homolog B (cnfn-b) from Xenopus laevis (African clawed frog).